The primary structure comprises 1020 residues: C2 and GRAM domain-containing protein At1g03370 (1020 aa).

Residues 1–102 form the C2 1 domain; the sequence is MKLQVRVVEA…ENQSLGTVWY (102 aa). 5 residues coordinate Ca(2+): D17, D23, D69, D71, and D77. Polar residues-rich tracts occupy residues 134-144 and 158-172; these read TSSGDQTSASR and TCAS…SSIP. Positions 134 to 172 are disordered; the sequence is TSSGDQTSASRSPDLRLESPIDPSTCASPSRSDDASSIP. The 173-residue stretch at 249–421 folds into the VASt 1 domain; the sequence is SGGVVVDQLF…LLAQSVKPVD (173 aa). Residues 454 to 474 form a helical membrane-spanning segment; it reads FTVLSTFLIGIYVFVHIVFAI. The C2 2 domain occupies 517 to 635; the sequence is QARKQKGSDH…NISDLADVWV (119 aa). Ca(2+) contacts are provided by D551, D557, D604, F605, and D606. The GRAM domain occupies 689–752; that stretch reads AFQKLFGLPQ…LWEDIEEIQV (64 aa). Residues 848-1010 form the VASt 2 domain; it reads RFSEVFSLTL…MTFGFLEKEY (163 aa).

It depends on Ca(2+) as a cofactor.

It is found in the membrane. This Arabidopsis thaliana (Mouse-ear cress) protein is C2 and GRAM domain-containing protein At1g03370.